A 396-amino-acid chain; its full sequence is Chalcone synthase (396 aa).

Residue C169 is part of the active site.

This sequence belongs to the thiolase-like superfamily. Chalcone/stilbene synthases family.

The enzyme catalyses (E)-4-coumaroyl-CoA + 3 malonyl-CoA + 3 H(+) = 2',4,4',6'-tetrahydroxychalcone + 3 CO2 + 4 CoA. Its pathway is secondary metabolite biosynthesis; flavonoid biosynthesis. Its function is as follows. The primary product of this enzyme is 4,2',4',6'-tetrahydroxychalcone (also termed naringenin-chalcone or chalcone) which can under specific conditions spontaneously isomerize into naringenin. The polypeptide is Chalcone synthase (CHS) (Pinus sylvestris (Scotch pine)).